We begin with the raw amino-acid sequence, 278 residues long: Trans-2,3-dihydro-3-hydroxyanthranilate isomerase (278 aa).

Glu45 is an active-site residue.

The protein belongs to the PhzF family.

It carries out the reaction (5S,6S)-6-amino-5-hydroxycyclohexa-1,3-diene-1-carboxyate = (1R,6S)-6-amino-5-oxocyclohex-2-ene-1-carboxylate. The protein operates within secondary metabolite biosynthesis; pyocyanine biosynthesis. Its function is as follows. Isomerase that catalyzes the condensation of two molecules of trans-2,3-dihydro-3-hydroxyanthranilic acid (DHHA) into the phenazine ring system. The final product is not yet known. The chain is Trans-2,3-dihydro-3-hydroxyanthranilate isomerase (phzF1) from Pseudomonas aeruginosa (strain ATCC 15692 / DSM 22644 / CIP 104116 / JCM 14847 / LMG 12228 / 1C / PRS 101 / PAO1).